Reading from the N-terminus, the 181-residue chain is GTP cyclohydrolase 1 2 (181 aa).

This sequence belongs to the GTP cyclohydrolase I family. As to quaternary structure, homomer.

The enzyme catalyses GTP + H2O = 7,8-dihydroneopterin 3'-triphosphate + formate + H(+). It participates in cofactor biosynthesis; 7,8-dihydroneopterin triphosphate biosynthesis; 7,8-dihydroneopterin triphosphate from GTP: step 1/1. The chain is GTP cyclohydrolase 1 2 (folE2) from Pseudomonas aeruginosa (strain ATCC 15692 / DSM 22644 / CIP 104116 / JCM 14847 / LMG 12228 / 1C / PRS 101 / PAO1).